Reading from the N-terminus, the 245-residue chain is Histone deacetylase HDT1 (245 aa).

Position 1 is an N-acetylmethionine (Met1). Required to repress transcription regions lie at residues 2–5 and 101–162; these read EFWG and GYSE…EEEE. The segment at 99-245 is disordered; sequence PQGYSEEEEE…HNKAKHAAAK (147 aa). Over residues 103 to 113 the composition is skewed to acidic residues; that stretch reads SEEEEEEEEEV. Residues 114 to 124 are compositionally biased toward low complexity; it reads PAGNAAKAVAK. Residues 137-162 are compositionally biased toward acidic residues; that stretch reads DDEEDESDSDGMDEDDSDGEDSEEEE. The segment covering 178–195 has biased composition (low complexity); that stretch reads TTPKAPVSAKKAKVAVTP. Residues 208 to 234 show a composition bias toward polar residues; the sequence is ANQSPKSASQVSCGSCKKTFNSGNALE. The residue at position 211 (Ser211) is a Phosphoserine. The C2H2-type zinc finger occupies 218 to 241; that stretch reads VSCGSCKKTFNSGNALESHNKAKH.

Belongs to the histone deacetylase HD2 family. In terms of assembly, interacts with DNMT2. Interacts with DEK3. In terms of tissue distribution, expressed in leaves, roots, stems, young plantlets, flowers and siliques. Highest levels in ovules, embryos, shoot apical meristems and first leaves. Also expressed in somatic embryos.

The protein resides in the nucleus. Its subcellular location is the nucleolus. Its function is as follows. Probably mediates the deacetylation of lysine residues on the N-terminal part of the core histones (H2A, H2B, H3 and H4). Histone deacetylation gives a tag for epigenetic repression and plays an important role in transcriptional regulation, cell cycle progression and developmental events. Required for histone H3 'Lys-9' deacetylation. Involved in rRNA gene silencing in nucleolar dominance. Seems to be implicated in the regulation of genes involved in seeds development. This is Histone deacetylase HDT1 from Arabidopsis thaliana (Mouse-ear cress).